A 468-amino-acid chain; its full sequence is 6-phospho-beta-galactosidase (468 aa).

Residues Gln19, His116, Asn159, Glu160, and Asn297 each coordinate D-galactose 6-phosphate. Catalysis depends on Glu160, which acts as the Proton donor. Glu375 acts as the Nucleophile in catalysis. D-galactose 6-phosphate contacts are provided by Ser428, Trp429, Lys435, and Tyr437.

This sequence belongs to the glycosyl hydrolase 1 family.

The catalysed reaction is a 6-phospho-beta-D-galactoside + H2O = D-galactose 6-phosphate + an alcohol. It participates in carbohydrate metabolism; lactose degradation; D-galactose 6-phosphate and beta-D-glucose from lactose 6-phosphate: step 1/1. The chain is 6-phospho-beta-galactosidase from Streptococcus pneumoniae (strain JJA).